Here is a 398-residue protein sequence, read N- to C-terminus: Na(+)/H(+) antiporter NhaA (398 aa).

12 consecutive transmembrane segments (helical) span residues 9–29 (MITH…AAIV), 57–77 (LSLL…AVGL), 95–115 (AFPA…YSLM), 124–144 (AGWA…LALL), 154–174 (VFML…IALF), 177–197 (TALE…MALM), 204–224 (FLSL…LSGI), 226–246 (ATLA…STEV), 255–275 (WLQP…NAGI), 288–308 (FLPL…IVLF), 329–349 (IAAA…IANL), and 359–379 (IVLA…LGYL).

This sequence belongs to the NhaA Na(+)/H(+) (TC 2.A.33) antiporter family.

It localises to the cell inner membrane. The enzyme catalyses Na(+)(in) + 2 H(+)(out) = Na(+)(out) + 2 H(+)(in). Functionally, na(+)/H(+) antiporter that extrudes sodium in exchange for external protons. This Sodalis glossinidius (strain morsitans) protein is Na(+)/H(+) antiporter NhaA.